Consider the following 388-residue polypeptide: Protein RecA (388 aa).

79 to 86 (GPESSGKT) is an ATP binding site. The interval 347–388 (IDGEEVSEQDTENKKDEPKKEEAVNEEVPLDLGDELEIEIEE) is disordered. Residues 357–369 (TENKKDEPKKEEA) show a composition bias toward basic and acidic residues. Positions 370 to 388 (VNEEVPLDLGDELEIEIEE) are enriched in acidic residues.

It belongs to the RecA family.

It is found in the cytoplasm. Functionally, can catalyze the hydrolysis of ATP in the presence of single-stranded DNA, the ATP-dependent uptake of single-stranded DNA by duplex DNA, and the ATP-dependent hybridization of homologous single-stranded DNAs. It interacts with LexA causing its activation and leading to its autocatalytic cleavage. The protein is Protein RecA of Streptococcus pneumoniae (strain Hungary19A-6).